Consider the following 123-residue polypeptide: RNA silencing suppressor (123 aa).

Residues 52 to 55 (KRRR) are basic. Residues 62–83 (CVRCFRVNPGFYFTKRCDGITC) form a C4-type zinc finger.

This sequence belongs to the carlaviruses nucleic acid-binding protein family.

Its function is as follows. Suppressor of viral-induced RNA silencing. The potential mechanism of action is based on sequestering siRNAs. The chain is RNA silencing suppressor from Populus balsamifera (Balsam poplar).